The sequence spans 280 residues: uncharacterized protein (280 aa).

The next 6 membrane-spanning stretches (helical) occupy residues 3-23 (ILITALEQSLIMLPLILGMYI), 52-72 (FGLFHALIFAIIAGGINGSIV), 81-101 (INGLIAGILANFMLYSVNLQI), 123-143 (NWLVPLILINSFIIVIVLILL), 196-216 (FADINMGYGVALVGIGAIIIG), and 233-253 (IFACFIGILFYFISLSILLHI).

It localises to the cell membrane. This is an uncharacterized protein from Rickettsia prowazekii (strain Madrid E).